We begin with the raw amino-acid sequence, 449 residues long: UDP-N-acetylmuramoylalanine--D-glutamate ligase (449 aa).

Residue 118-124 (GTNGKTT) coordinates ATP.

Belongs to the MurCDEF family.

The protein resides in the cytoplasm. It carries out the reaction UDP-N-acetyl-alpha-D-muramoyl-L-alanine + D-glutamate + ATP = UDP-N-acetyl-alpha-D-muramoyl-L-alanyl-D-glutamate + ADP + phosphate + H(+). It functions in the pathway cell wall biogenesis; peptidoglycan biosynthesis. Cell wall formation. Catalyzes the addition of glutamate to the nucleotide precursor UDP-N-acetylmuramoyl-L-alanine (UMA). The chain is UDP-N-acetylmuramoylalanine--D-glutamate ligase from Staphylococcus aureus (strain Mu3 / ATCC 700698).